Reading from the N-terminus, the 196-residue chain is Protein GrpE (196 aa).

Over residues 1–26 (MQEPHNQEPIEEQKLSEMEDTLEKQH) the composition is skewed to basic and acidic residues. The tract at residues 1–40 (MQEPHNQEPIEEQKLSEMEDTLEKQHSGASTENTERAEEG) is disordered.

The protein belongs to the GrpE family. In terms of assembly, homodimer.

Its subcellular location is the cytoplasm. Its function is as follows. Participates actively in the response to hyperosmotic and heat shock by preventing the aggregation of stress-denatured proteins, in association with DnaK and GrpE. It is the nucleotide exchange factor for DnaK and may function as a thermosensor. Unfolded proteins bind initially to DnaJ; upon interaction with the DnaJ-bound protein, DnaK hydrolyzes its bound ATP, resulting in the formation of a stable complex. GrpE releases ADP from DnaK; ATP binding to DnaK triggers the release of the substrate protein, thus completing the reaction cycle. Several rounds of ATP-dependent interactions between DnaJ, DnaK and GrpE are required for fully efficient folding. This Nitrosomonas eutropha (strain DSM 101675 / C91 / Nm57) protein is Protein GrpE.